A 214-amino-acid polypeptide reads, in one-letter code: Probable nicotinate-nucleotide adenylyltransferase (214 aa).

Belongs to the NadD family.

It carries out the reaction nicotinate beta-D-ribonucleotide + ATP + H(+) = deamido-NAD(+) + diphosphate. The protein operates within cofactor biosynthesis; NAD(+) biosynthesis; deamido-NAD(+) from nicotinate D-ribonucleotide: step 1/1. Catalyzes the reversible adenylation of nicotinate mononucleotide (NaMN) to nicotinic acid adenine dinucleotide (NaAD). This is Probable nicotinate-nucleotide adenylyltransferase from Buchnera aphidicola subsp. Acyrthosiphon pisum (strain 5A).